The primary structure comprises 134 residues: MAKYQCPDCQYIYDECKGEPHEGFQPNTNWGEIPEEWACPDCAVRDKIDFKMLADPRCEITQLKQNDPVIKQDNNIIEDTLSEPSILSAELEFTAEKISITDERENTPDNKVERRSQSQAVRRSSVKKIKNNKR.

The 53-residue stretch at 1–53 (MAKYQCPDCQYIYDECKGEPHEGFQPNTNWGEIPEEWACPDCAVRDKIDFKML) folds into the Rubredoxin-like domain. Fe cation contacts are provided by Cys6, Cys9, Cys39, and Cys42. Residues 99–116 (SITDERENTPDNKVERRS) show a composition bias toward basic and acidic residues. A disordered region spans residues 99–134 (SITDERENTPDNKVERRSQSQAVRRSSVKKIKNNKR). Basic residues predominate over residues 124–134 (SSVKKIKNNKR).

Belongs to the rubredoxin family. Requires Fe(3+) as cofactor.

The protein localises to the cytoplasm. The protein operates within hydrocarbon metabolism; alkane degradation. In terms of biological role, involved in the hydrocarbon hydroxylating system, which transfers electrons from NADH to rubredoxin reductase and then through rubredoxin to alkane 1 monooxygenase. The sequence is that of Rubredoxin-2 (alkF) from Pseudomonas putida (Arthrobacter siderocapsulatus).